A 196-amino-acid chain; its full sequence is DnaA initiator-associating protein DiaA (196 aa).

The SIS domain maps to 34-196 (LVHSLLNGNK…DNTLFLHQDD (163 aa)).

The protein belongs to the SIS family. DiaA subfamily. In terms of assembly, homotetramer; dimer of dimers.

In terms of biological role, required for the timely initiation of chromosomal replication via direct interactions with the DnaA initiator protein. In Salmonella paratyphi A (strain ATCC 9150 / SARB42), this protein is DnaA initiator-associating protein DiaA.